The primary structure comprises 570 residues: MASTSNTDRVIDAGMIKKAHPEQTPPDVSHEGDVATEKGDSDGVEQAAPTGPTDGTPWVTGIKLVMIMSGITLVCFLMLLDTSIISTATPRITSQFHSLPDVGWYGSAYLLASASLVPLTGKIYQNFNTKWSFVSFFAVFELGSLLCGVATSSKMLIVGRAVAGMGGSGIQNGAFTIIAGCVPMQRRPALTGLLMGFAQLGIVIGPLIGGAFTQYTTWRWCFYINLPIGAVVGLLLFFVHIPEQLPKPKGISVVHIILRKLDLVGFVLFAPAAVQFLLALQYGGNKYAWNSSVVIGLFCGAGATFVCFILWEWYKGDDAMIPYSMICRQTVWTSCVVYGFLMATLLVASYYLPIYFQAIKGVNAMLSGVYILPSILSQSALAIISGALVGRFGYYLPWSLAGGIVSSVGNGLLTTFTPSTSVGKWIGYQILLGAGRGAGLQMPIIAAQNNLPPPLIPVAMALIMFCQSFFGSTFLSYADVIFTNSLRNKLKEYAPEVPPESIIVAGATAFRKAVPADQLPGVLKAYSKSVDYVFYLAVGAAVATFVFSCGMGWKDIRGNEPPQPSGDEKV.

Residues 14–54 (GMIKKAHPEQTPPDVSHEGDVATEKGDSDGVEQAAPTGPTD) form a disordered region. Residues 28-41 (VSHEGDVATEKGDS) show a composition bias toward basic and acidic residues. The next 7 helical transmembrane spans lie at 65–85 (VMIM…TSII), 99–119 (LPDV…LVPL), 131–151 (WSFV…GVAT), 162–182 (VAGM…AGCV), 192–212 (GLLM…GGAF), 221–241 (CFYI…FVHI), and 263–283 (LVGF…LQYG). An N-linked (GlcNAc...) asparagine glycan is attached at asparagine 290. 7 helical membrane-spanning segments follow: residues 293–313 (VVIG…LWEW), 336–356 (VVYG…PIYF), 369–389 (VYIL…GALV), 392–412 (FGYY…GNGL), 425–445 (WIGY…MPII), 455–475 (LIPV…STFL), and 533–553 (VFYL…GMGW).

Belongs to the major facilitator superfamily. TCR/Tet family.

The protein localises to the cell membrane. Functionally, MFS-type transporter; part of the gene cluster that mediates the biosynthesis of azaphilone pigments (MonAzPs), very widely used as food colorant. In Monascus ruber (Mold), this protein is MFS-type transporter pigP.